We begin with the raw amino-acid sequence, 273 residues long: Undecaprenyl-diphosphatase (273 aa).

A run of 8 helical transmembrane segments spans residues 13 to 35 (LGVV…IIVG), 45 to 65 (ANTF…VMFW), 90 to 110 (LSLI…LIFH), 116 to 136 (LFNP…LIAA), 157 to 177 (AFVI…RSGA), 190 to 210 (YAAS…ATVL), 222 to 242 (GDVP…LIAI), and 252 to 272 (ISFI…YVVF).

This sequence belongs to the UppP family.

It is found in the cell inner membrane. The catalysed reaction is di-trans,octa-cis-undecaprenyl diphosphate + H2O = di-trans,octa-cis-undecaprenyl phosphate + phosphate + H(+). Functionally, catalyzes the dephosphorylation of undecaprenyl diphosphate (UPP). Confers resistance to bacitracin. This Klebsiella pneumoniae subsp. pneumoniae (strain ATCC 700721 / MGH 78578) protein is Undecaprenyl-diphosphatase.